The following is a 464-amino-acid chain: Protein btn-1 (464 aa).

The signal sequence occupies residues 1 to 22; sequence MNRSPSSSGLLPLPGAPSSSWA. 10 helical membrane passes run 38 to 58, 73 to 93, 102 to 122, 129 to 149, 167 to 187, 190 to 210, 288 to 308, 332 to 352, 354 to 374, and 376 to 396; these read AVFI…VIIL, VVLL…PYFI, IFIF…TPPS, LIGV…FLGL, GAGL…GLSV, SLLA…LILP, SLFF…YTIN, PFYG…IAFI, IHHL…LTLH, and LLNF…EGLL.

The protein belongs to the battenin family.

The protein resides in the vacuole membrane. In terms of biological role, involved in vacuolar transport and vacuole pH homeostasis. Also required for cytokinesis. This Neurospora crassa (strain ATCC 24698 / 74-OR23-1A / CBS 708.71 / DSM 1257 / FGSC 987) protein is Protein btn-1 (cln3).